The sequence spans 126 residues: RutC family protein y4sK (126 aa).

The protein belongs to the RutC family.

This is RutC family protein y4sK from Sinorhizobium fredii (strain NBRC 101917 / NGR234).